Consider the following 352-residue polypeptide: MSASTTATTRHDWSLAEVKALFQQPFNDLLFQAQTVHRAHFDPNRVQVSTLLSIKTGACPEDCKYCPQSGHYNTGLEKQKLMEVQKVLEEAARAKAIGSTRFCMGAAWKHPSAKDMPYVLEMVKGVKAMGLETCMTLGKLDQDQTLALAQAGLDYYNHNLDTSPEFYGSIITTRTYGERLQTLAYVRDAGMKICSGGILGMGESLDDRAGLLIQLANLPEHPESVPINMLVKVAGTPLAEEEDVDPFDFIRMLAVARILMPKSHVRLSAGREQMNEQMQALAFMAGANSIFYGEKLLTTANPQADKDMQLFARLGIKPEAREEHADEVHQAAIEQALVEQRSSEMFYNAASA.

The region spanning 44–262 (NRVQVSTLLS…LAVARILMPK (219 aa)) is the Radical SAM core domain. The [4Fe-4S] cluster site is built by C59, C63, and C66. Residues C103, C134, C194, and R266 each contribute to the [2Fe-2S] cluster site.

It belongs to the radical SAM superfamily. Biotin synthase family. As to quaternary structure, homodimer. The cofactor is [4Fe-4S] cluster. [2Fe-2S] cluster serves as cofactor.

The catalysed reaction is (4R,5S)-dethiobiotin + (sulfur carrier)-SH + 2 reduced [2Fe-2S]-[ferredoxin] + 2 S-adenosyl-L-methionine = (sulfur carrier)-H + biotin + 2 5'-deoxyadenosine + 2 L-methionine + 2 oxidized [2Fe-2S]-[ferredoxin]. The protein operates within cofactor biosynthesis; biotin biosynthesis; biotin from 7,8-diaminononanoate: step 2/2. Functionally, catalyzes the conversion of dethiobiotin (DTB) to biotin by the insertion of a sulfur atom into dethiobiotin via a radical-based mechanism. This is Biotin synthase from Pseudomonas putida (strain GB-1).